Reading from the N-terminus, the 398-residue chain is Stimulator of interferon genes protein (398 aa).

The Cytoplasmic segment spans residues 1 to 16; the sequence is MSVMGEDALVPRARSR. The helical transmembrane segment at 17-37 threads the bilayer; the sequence is LPVMCAAGLGFLTLAVAWLLD. Residues 38–44 are Lumenal-facing; the sequence is SDKFSER. A helical transmembrane segment spans residues 45-65; that stretch reads AGIIAFGLMLERFIYCICLLA. Residues 66 to 91 are Cytoplasmic-facing; the sequence is EELLFHSRQRYHGRMSEIFRACFRGS. A helical membrane pass occupies residues 92–112; the sequence is GILGMCAIFLMLMLGGVSFSV. The Lumenal portion of the chain corresponds to 113-120; sequence KQWSHFNL. A helical membrane pass occupies residues 121–141; sequence MCAGYMLLNSLGVLGPAPVEI. Over 142-398 the chain is Cytoplasmic; it reads SEICEAKKMN…FNPSSAMKQN (257 aa). A cyclic dinucleotide-binding domain (CBD) region spans residues 150 to 331; sequence MNVAHGLAWS…QNLKQQDGEI (182 aa). 2',3'-cGAMP contacts are provided by Ser-159, Tyr-164, Arg-230, and Thr-254. Residues Ser-159, Tyr-164, 230-233, and Thr-254 contribute to the 3',3'-c-di-GMP site; that span reads RSYT. The tract at residues 375–398 is disordered; the sequence is PQSLRSEPVETTDYFNPSSAMKQN. Residues 387–398 show a composition bias toward polar residues; that stretch reads DYFNPSSAMKQN.

Belongs to the STING family. As to quaternary structure, homodimer; forms a homodimer in absence of cyclic nucleotide (c-di-GMP or cGAMP). Homotetramer; in presence of cyclic nucleotide (c-di-GMP or cGAMP), forms tetramers and higher-order oligomers through side-by-side packing. Interacts (when phosphorylated) with irf3; following activation and phosphorylation by tbk1, recruits irf3. Post-translationally, phosphorylation by TBK1 leads to activation and production of IFN-beta. Following cyclic nucleotide (c-di-GMP or cGAMP)-binding, activation and translocation from the endoplasmic reticulum, STING1 is phosphorylated by tbk1, leading to recruitment of the transcription factor irf3 to induce type-I interferons and other cytokines.

Its subcellular location is the endoplasmic reticulum membrane. The protein resides in the cytoplasm. It localises to the perinuclear region. It is found in the endoplasmic reticulum-Golgi intermediate compartment membrane. The protein localises to the golgi apparatus membrane. Its subcellular location is the cytoplasmic vesicle. The protein resides in the autophagosome membrane. The catalysed reaction is H(+)(in) = H(+)(out). Its function is as follows. Facilitator of innate immune signaling that acts as a sensor of cytosolic DNA from bacteria and viruses and promotes the production of type I interferon (IFN-alpha and IFN-beta). Innate immune response is triggered in response to non-CpG double-stranded DNA from viruses and bacteria delivered to the cytoplasm. Acts by binding cyclic dinucleotides: recognizes and binds cyclic di-GMP (c-di-GMP), a second messenger produced by bacteria, and cyclic GMP-AMP (cGAMP), a messenger produced by CGAS in response to DNA virus in the cytosol. Upon binding of c-di-GMP or cGAMP, STING1 oligomerizes and is able to activate both NF-kappa-B and irf3 transcription pathways to induce expression of type I interferon and exert a potent anti-viral state. Exhibits 2',3' phosphodiester linkage-specific ligand recognition: can bind both 2'-3' linked cGAMP and 3'-3' linked cGAMP but is preferentially activated by 2'-3' linked cGAMP. In addition to promote the production of type I interferons, plays a direct role in autophagy. Following cGAMP-binding, STING1 buds from the endoplasmic reticulum into COPII vesicles, which then form the endoplasmic reticulum-Golgi intermediate compartment (ERGIC). The ERGIC serves as the membrane source for LC3 lipidation, leading to formation of autophagosomes that target cytosolic DNA or DNA viruses for degradation by the lysosome. Promotes autophagy by acting as a proton channel that directs proton efflux from the Golgi to facilitate LC3 lipidation. The autophagy- and interferon-inducing activities can be uncoupled and autophagy induction is independent of TBK1 phosphorylation. The polypeptide is Stimulator of interferon genes protein (Danio rerio (Zebrafish)).